A 383-amino-acid chain; its full sequence is MKMNLPPFIELYRALIATPSISATDSALDQSNHTLINLLAGWFGDIGFHVEVQPVPGTLNKFNMLARIGEGKGGLLLAGHTDTVPFDDGRWTRDPFTLTEHDNKLYGLGTADMKGFFAFILDALRDIDPTKLTKPLYVLATADEETTMAGAKYFSESTQIRPDCAIIGEPTSLQPVRAHKGHMSNAIRIQGQSGHSSDPSRGVNAIELMHEAISHLLVLRNTLQERYHNPIFHIPYPTMNLGHIHGGDAANRICGCCELHMDIRPLPGITLNDLDGLLSEALAPVSQRWPGRLTISELHPPIPGYECPPDHRLISVVENLLGTKTEIVNYCTEAPFIQTLCPTLVLGPGSIEQAHQPDEYIDTAFIKPTRELISQVIHHFCHH.

His-80 is a binding site for Zn(2+). The active site involves Asp-82. Asp-112 serves as a coordination point for Zn(2+). Residue Glu-144 is part of the active site. Zn(2+) is bound by residues Glu-145, Glu-169, and His-355.

It belongs to the peptidase M20A family. ArgE subfamily. As to quaternary structure, homodimer. It depends on Zn(2+) as a cofactor. Requires Co(2+) as cofactor. The cofactor is glutathione.

The protein localises to the cytoplasm. The enzyme catalyses N(2)-acetyl-L-ornithine + H2O = L-ornithine + acetate. It participates in amino-acid biosynthesis; L-arginine biosynthesis; L-ornithine from N(2)-acetyl-L-ornithine (linear): step 1/1. Catalyzes the hydrolysis of the amide bond of N(2)-acetylated L-amino acids. Cleaves the acetyl group from N-acetyl-L-ornithine to form L-ornithine, an intermediate in L-arginine biosynthesis pathway, and a branchpoint in the synthesis of polyamines. The chain is Acetylornithine deacetylase from Pectobacterium atrosepticum (strain SCRI 1043 / ATCC BAA-672) (Erwinia carotovora subsp. atroseptica).